We begin with the raw amino-acid sequence, 305 residues long: Putative E3 ubiquitin-protein ligase SINAT1 (305 aa).

The segment at 57–93 (CPVCTNLMYPPIHQCPNGHTLCSSCKLRVQNTCPTCR) adopts an RING-type zinc-finger fold. The tract at residues 107-300 (VAESLEVPCR…EELKLRVTGR (194 aa)) is SBD. The SIAH-type zinc finger occupies 110–170 (SLEVPCRYQN…LVDHLKDDHK (61 aa)). Zn(2+) is bound by residues Cys-115, Cys-122, His-134, Cys-138, Cys-145, Cys-152, His-164, and His-169.

Belongs to the SINA (Seven in absentia) family. Interacts with SINAT6. Interacts with ATG6 and TRAF1A. Interacts with WAV3. Interacts with FREE1. Interacts with ELC/VPS23A.

The protein localises to the endosome. Its subcellular location is the multivesicular body. The protein resides in the cytoplasmic vesicle. It localises to the autophagosome. It carries out the reaction S-ubiquitinyl-[E2 ubiquitin-conjugating enzyme]-L-cysteine + [acceptor protein]-L-lysine = [E2 ubiquitin-conjugating enzyme]-L-cysteine + N(6)-ubiquitinyl-[acceptor protein]-L-lysine.. Its pathway is protein modification; protein ubiquitination. In terms of biological role, E3 ubiquitin-protein ligase that mediates ubiquitination and subsequent proteasomal degradation of target proteins. E3 ubiquitin ligases accept ubiquitin from an E2 ubiquitin-conjugating enzyme in the form of a thioester and then directly transfers the ubiquitin to targeted substrates. It probably triggers the ubiquitin-mediated degradation of different substrates. Mediates the proteasomal-dependent degradation of ATG6, a component of the autophagosome complex. Requires TRAF1A/MUSE14 and TRAF1B/MUSE13 to target ATG6 for ubiquitination and subsequent regulation of autophagosome assembly. Modulates directly the ubiquitination and proteasomal-dependent degradation of FREE1, a component of the ESCRT-I complex. Modulates directly the ubiquitination and proteasomal-dependent degradation of ELC/VPS23A, a component of the ESCRT-I complex. The chain is Putative E3 ubiquitin-protein ligase SINAT1 from Arabidopsis thaliana (Mouse-ear cress).